The following is a 100-amino-acid chain: Aspartyl/glutamyl-tRNA(Asn/Gln) amidotransferase subunit C (100 aa).

It belongs to the GatC family. Heterotrimer of A, B and C subunits.

The enzyme catalyses L-glutamyl-tRNA(Gln) + L-glutamine + ATP + H2O = L-glutaminyl-tRNA(Gln) + L-glutamate + ADP + phosphate + H(+). It catalyses the reaction L-aspartyl-tRNA(Asn) + L-glutamine + ATP + H2O = L-asparaginyl-tRNA(Asn) + L-glutamate + ADP + phosphate + 2 H(+). Its function is as follows. Allows the formation of correctly charged Asn-tRNA(Asn) or Gln-tRNA(Gln) through the transamidation of misacylated Asp-tRNA(Asn) or Glu-tRNA(Gln) in organisms which lack either or both of asparaginyl-tRNA or glutaminyl-tRNA synthetases. The reaction takes place in the presence of glutamine and ATP through an activated phospho-Asp-tRNA(Asn) or phospho-Glu-tRNA(Gln). The sequence is that of Aspartyl/glutamyl-tRNA(Asn/Gln) amidotransferase subunit C from Streptococcus uberis (strain ATCC BAA-854 / 0140J).